Reading from the N-terminus, the 357-residue chain is CCN family member 3 (357 aa).

The first 31 residues, 1-31 (MQSVQSTSFCLRKQCLCLTFLLLHLLGQVAA), serve as a signal peptide directing secretion. The IGFBP N-terminal domain occupies 32–105 (TQRCPPQCPG…SNQTGICTAV (74 aa)). 6 disulfide bridges follow: cysteine 35/cysteine 61, cysteine 39/cysteine 63, cysteine 43/cysteine 64, cysteine 50/cysteine 67, cysteine 75/cysteine 89, and cysteine 81/cysteine 102. Residue asparagine 97 is glycosylated (N-linked (GlcNAc...) asparagine). The VWFC domain occupies 108–174 (DNCVFDGVIY…GECCEKWICG (67 aa)). The region spanning 205–250 (NCIEQTTEWTACSKSCGMGFSTRVTNRNRQCEMLKQTRLCMVRPCE) is the TSP type-1 domain. Cysteine 244 is lipidated: S-palmitoyl cysteine. Intrachain disulfides connect cysteine 264–cysteine 301, cysteine 281–cysteine 315, cysteine 292–cysteine 331, cysteine 295–cysteine 333, and cysteine 300–cysteine 337. Residues 264–338 (CLRTKKSLKA…GTCTCHTNCP (75 aa)) form the CTCK domain. Asparagine 280 carries an N-linked (GlcNAc...) asparagine glycan.

Belongs to the CCN family. Interacts with FBLN1. Interacts (via CTCK domain) with NOTCH1 (via the EGF-like repeat region). Interacts with GJA1/CX43. Interacts with ITGA5:ITGB1, ITGAV:ITGB3 and ITGAV:ITGB5. Interacts with ZDHHC22; the interaction may lead to CCN3 palmitoylation. In terms of processing, may be palmitoylated on Cys-244, which is important for extracellular secretion. As to expression, expressed in endothelial cells (at protein level). Expressed in bone marrow and thymic cells.

It localises to the secreted. The protein localises to the cytoplasm. Its subcellular location is the cell junction. It is found in the gap junction. Immediate-early protein playing a role in various cellular processes including proliferation, adhesion, migration, differentiation and survival. Acts by binding to integrins or membrane receptors such as NOTCH1. Essential regulator of hematopoietic stem and progenitor cell function. Inhibits myogenic differentiation through the activation of Notch-signaling pathway. Inhibits vascular smooth muscle cells proliferation by increasing expression of cell-cycle regulators such as CDKN2B or CDKN1A independently of TGFB1 signaling. Ligand of integrins ITGAV:ITGB3 and ITGA5:ITGB1, acts directly upon endothelial cells to stimulate pro-angiogenic activities and induces angiogenesis. In endothelial cells, supports cell adhesion, induces directed cell migration (chemotaxis) and promotes cell survival. Also plays a role in cutaneous wound healing acting as integrin receptor ligand. Supports skin fibroblast adhesion through ITGA5:ITGB1 and ITGA6:ITGB1 and induces fibroblast chemotaxis through ITGAV:ITGB5. Seems to enhance bFGF-induced DNA synthesis in fibroblasts. Involved in bone regeneration as a negative regulator. Enhances the articular chondrocytic phenotype, whereas it repressed the one representing endochondral ossification. Impairs pancreatic beta-cell function, inhibits beta-cell proliferation and insulin secretion. Plays a role as negative regulator of endothelial pro-inflammatory activation reducing monocyte adhesion, its anti-inflammatory effects occur secondary to the inhibition of NF-kappaB signaling pathway. Contributes to the control and coordination of inflammatory processes in atherosclerosis. Attenuates inflammatory pain through regulation of IL1B- and TNF-induced MMP9, MMP2 and CCL2 expression. Inhibits MMP9 expression through ITGB1 engagement. Brain osteoanabolic hormone. Drives osteogenesis in osteochondral skeletal stem cells. During lactation, maintains the maternal skeleton and viability of offspring. In Homo sapiens (Human), this protein is CCN family member 3.